The primary structure comprises 597 residues: Elongation factor 4 (597 aa).

Residues 2–184 enclose the tr-type G domain; it reads DHIRNFSIIA…ALVAKVPPPK (183 aa). Residues 14 to 19 and 131 to 134 contribute to the GTP site; these read DHGKST and NKID.

The protein belongs to the TRAFAC class translation factor GTPase superfamily. Classic translation factor GTPase family. LepA subfamily.

The protein resides in the cell inner membrane. It carries out the reaction GTP + H2O = GDP + phosphate + H(+). Required for accurate and efficient protein synthesis under certain stress conditions. May act as a fidelity factor of the translation reaction, by catalyzing a one-codon backward translocation of tRNAs on improperly translocated ribosomes. Back-translocation proceeds from a post-translocation (POST) complex to a pre-translocation (PRE) complex, thus giving elongation factor G a second chance to translocate the tRNAs correctly. Binds to ribosomes in a GTP-dependent manner. The protein is Elongation factor 4 of Paraburkholderia phytofirmans (strain DSM 17436 / LMG 22146 / PsJN) (Burkholderia phytofirmans).